The following is a 134-amino-acid chain: ATP synthase epsilon chain, chloroplastic (134 aa).

This sequence belongs to the ATPase epsilon chain family. As to quaternary structure, F-type ATPases have 2 components, CF(1) - the catalytic core - and CF(0) - the membrane proton channel. CF(1) has five subunits: alpha(3), beta(3), gamma(1), delta(1), epsilon(1). CF(0) has three main subunits: a, b and c.

The protein localises to the plastid. It is found in the chloroplast thylakoid membrane. Produces ATP from ADP in the presence of a proton gradient across the membrane. The sequence is that of ATP synthase epsilon chain, chloroplastic from Porphyra purpurea (Red seaweed).